The chain runs to 194 residues: Imidazoleglycerol-phosphate dehydratase (194 aa).

Belongs to the imidazoleglycerol-phosphate dehydratase family.

It localises to the cytoplasm. It catalyses the reaction D-erythro-1-(imidazol-4-yl)glycerol 3-phosphate = 3-(imidazol-4-yl)-2-oxopropyl phosphate + H2O. Its pathway is amino-acid biosynthesis; L-histidine biosynthesis; L-histidine from 5-phospho-alpha-D-ribose 1-diphosphate: step 6/9. The sequence is that of Imidazoleglycerol-phosphate dehydratase from Caldicellulosiruptor bescii (strain ATCC BAA-1888 / DSM 6725 / KCTC 15123 / Z-1320) (Anaerocellum thermophilum).